Here is a 202-residue protein sequence, read N- to C-terminus: Small ribosomal subunit protein uS4c (202 aa).

An S4 RNA-binding domain is found at 90–152 (MRLDNVIFRL…RKSESIINKN (63 aa)).

Belongs to the universal ribosomal protein uS4 family. Part of the 30S ribosomal subunit. Contacts protein S5. The interaction surface between S4 and S5 is involved in control of translational fidelity.

The protein localises to the plastid. The protein resides in the chloroplast. Functionally, one of the primary rRNA binding proteins, it binds directly to 16S rRNA where it nucleates assembly of the body of the 30S subunit. With S5 and S12 plays an important role in translational accuracy. The protein is Small ribosomal subunit protein uS4c (rps4) of Dendrohypopterygium filiculiforme (Moss).